The primary structure comprises 355 residues: Septin-2B (355 aa).

The Septin-type G domain maps to 33 to 305 (KGFEFTLMVV…ENFRSERLKK (273 aa)). A G1 motif region spans residues 43 to 50 (GESGLGKS). Residues 43-50 (GESGLGKS), Thr77, Gly103, 182-190 (KADTLTLRE), Gly240, and Arg255 each bind GTP. Residues 100–103 (DTPG) form a G3 motif region. A G4 motif region spans residues 181–184 (AKAD). The tract at residues 259–269 (WGVVEVENPEH) is important for dimerization.

The protein belongs to the TRAFAC class TrmE-Era-EngA-EngB-Septin-like GTPase superfamily. Septin GTPase family. As to quaternary structure, septins polymerize into heterooligomeric protein complexes that form filaments, and associate with cellular membranes, actin filaments and microtubules. GTPase activity is required for filament formation. Can form heterooligomers with other family members and form filaments. Interacts with wdpcp.

The protein localises to the cytoplasm. The protein resides in the cytoskeleton. It is found in the spindle. It localises to the cleavage furrow. Its subcellular location is the midbody. The protein localises to the cell cortex. The protein resides in the cell projection. It is found in the cilium membrane. Its function is as follows. Filament-forming cytoskeletal GTPase. Required for normal organization of the actin cytoskeleton. Plays a role in the biogenesis of polarized columnar-shaped epithelium. Required for the progression through mitosis through regulation of chromosome congression. During anaphase, may be required for chromosome segregation and spindle elongation. Plays a role in ciliogenesis and collective cell movements including convergent extension during gastrulation. In cilia, required for the integrity of the diffusion barrier at the base of the primary cilium that prevents diffusion of transmembrane proteins between the cilia and plasma membranes. Controls cell shape and not polarization of cells during convergent extension. This Xenopus tropicalis (Western clawed frog) protein is Septin-2B (sept2-B).